We begin with the raw amino-acid sequence, 652 residues long: Phosphomethylpyrimidine synthase (652 aa).

Substrate-binding positions include Asn-235, Met-264, Tyr-293, His-329, 349–351 (SRG), 390–393 (DGMR), and Glu-429. Zn(2+) is bound at residue His-433. A substrate-binding site is contributed by Tyr-456. Position 497 (His-497) interacts with Zn(2+). [4Fe-4S] cluster contacts are provided by Cys-577, Cys-580, and Cys-585.

Belongs to the ThiC family. In terms of assembly, homodimer. It depends on [4Fe-4S] cluster as a cofactor.

The catalysed reaction is 5-amino-1-(5-phospho-beta-D-ribosyl)imidazole + S-adenosyl-L-methionine = 4-amino-2-methyl-5-(phosphooxymethyl)pyrimidine + CO + 5'-deoxyadenosine + formate + L-methionine + 3 H(+). The protein operates within cofactor biosynthesis; thiamine diphosphate biosynthesis. Its function is as follows. Catalyzes the synthesis of the hydroxymethylpyrimidine phosphate (HMP-P) moiety of thiamine from aminoimidazole ribotide (AIR) in a radical S-adenosyl-L-methionine (SAM)-dependent reaction. The protein is Phosphomethylpyrimidine synthase of Shewanella woodyi (strain ATCC 51908 / MS32).